Reading from the N-terminus, the 619-residue chain is Large T antigen (619 aa).

In terms of domain architecture, J spans 10–73 (ELRGLLGTPD…ATTSQVPEYG (64 aa)). The LXCXE motif motif lies at 93–97 (LHCDE). Positions 98–108 (ELEPSDNEEEN) are enriched in acidic residues. The interval 98–131 (ELEPSDNEEENPAGSQAPGSQATPPKKPRTSPDF) is disordered. Phosphoserine; by host is present on S102. Residues 110–120 (AGSQAPGSQAT) show a composition bias toward polar residues. T120 carries the phosphothreonine; by host modification. The short motif at 121 to 128 (PPKKPRTS) is the Nuclear localization signal element. Residues 132–245 (PEVLKEYVSN…SQNIQGGLPS (114 aa)) constitute a DNA-binding region (T-ag OBD). The segment at 255–348 (EKSVNWKLIS…RRLDMKTLTR (94 aa)) adopts a T-ag D1-type zinc-finger fold. The Zn(2+) site is built by C292, C295, H303, and H307. The 196-residue stretch at 391–586 (NMPDVIFNYI…DDFTEKLQEC (196 aa)) folds into the SF3 helicase domain. ATP is bound at residue 417-424 (GPVNCGKT).

As to quaternary structure, forms homohexamers in the presence of ATP. Interacts with host HDAC1. Interacts (via LXCXE domain) with host RB1; the interaction induces the aberrant dissociation of RB1-E2F1 complex thereby disrupting RB1's activity. Interacts (via LXCXE domain) with host pRB-related proteins RBL1 and RBL2. Interacts (via C-terminus) with host TOP1 and POLA1 allowing DNA replication. Interacts with host TP53, inhibiting TP53 binding to DNA. Interacts with host preinitiation complex components TBP, TFIIA and TFIID to regulate transcription initiation. The cofactor is Mg(2+). Post-translationally, phosphorylated on both serine and threonine residues. Small t antigen inhibits the dephosphorylation by the AC form of PP2A. O-Glycosylated near the C-terminal region. In terms of processing, acetylated by CBP in a TP53-dependent manner.

The protein resides in the host nucleus. The enzyme catalyses Couples ATP hydrolysis with the unwinding of duplex DNA by translocating in the 3'-5' direction.. It catalyses the reaction ATP + H2O = ADP + phosphate + H(+). Isoform large T antigen is a key early protein essential for both driving viral replication and inducing cellular transformation. Plays a role in viral genome replication by driving entry of quiescent cells into the cell cycle and by autoregulating the synthesis of viral early mRNA. Displays highly oncogenic activities by corrupting the host cellular checkpoint mechanisms that guard cell division and the transcription, replication, and repair of DNA. Participates in the modulation of cellular gene expression preceeding viral DNA replication. This step involves binding to host key cell cycle regulators retinoblastoma protein RB1/pRb and TP53. Induces the disassembly of host E2F1 transcription factors from RB1, thus promoting transcriptional activation of E2F1-regulated S-phase genes. Inhibits host TP53 binding to DNA, abrogating the ability of TP53 to stimulate gene expression. Plays the role of a TFIID-associated factor (TAF) in transcription initiation for all three RNA polymerases, by stabilizing the TBP-TFIIA complex on promoters. Initiates viral DNA replication and unwinding via interactions with the viral origin of replication. Binds two adjacent sites in the SV40 origin. The replication fork movement is facilitated by Large T antigen helicase activity. Has processive 3'-5' DNA helicase activity which requires a short 3' single-stranded region and ATP. Activates the transcription of viral late mRNA, through host TBP and TFIIA stabilization. Interferes with histone deacetylation mediated by HDAC1, leading to activation of transcription. In Bovine polyomavirus (BPyV), this protein is Large T antigen.